Reading from the N-terminus, the 252-residue chain is Uridylate kinase (252 aa).

24–27 (KLSG) lines the ATP pocket. Residues 32–37 (GEEGFG) form an involved in allosteric activation by GTP region. Residue G66 coordinates UMP. ATP is bound by residues G67 and R71. Residues D86 and 147–154 (TGNPFFTT) contribute to the UMP site. ATP is bound by residues T174, Y180, and D183.

The protein belongs to the UMP kinase family. Homohexamer.

The protein resides in the cytoplasm. The catalysed reaction is UMP + ATP = UDP + ADP. The protein operates within pyrimidine metabolism; CTP biosynthesis via de novo pathway; UDP from UMP (UMPK route): step 1/1. Its activity is regulated as follows. Allosterically activated by GTP. Inhibited by UTP. Catalyzes the reversible phosphorylation of UMP to UDP. This is Uridylate kinase from Alcanivorax borkumensis (strain ATCC 700651 / DSM 11573 / NCIMB 13689 / SK2).